Consider the following 411-residue polypeptide: SH3 and cysteine-rich domain-containing protein 2 (411 aa).

The disordered stretch occupies residues 1 to 29 (MTEMSEKENEPDDAATHSPPGTVSALQET). The span at 19 to 29 (PPGTVSALQET) shows a compositional bias: polar residues. The residue at position 48 (serine 48) is a Phosphoserine. Residues 64–95 (TEVLLTPPTPLPPPSPPPTASDRGLATPSPSP) form a disordered region. Residues 70-82 (PPTPLPPPSPPPT) show a composition bias toward pro residues. Residues 110–161 (LHSFQEHVFKRASPCELCHQLIVGNSKQGLRCKMCKVSVHLWCSEEISHQQC) form a Phorbol-ester/DAG-type zinc finger. 2 disordered regions span residues 174–203 (SSPL…KVDP) and 219–288 (RSSF…ATLR). The segment covering 219 to 232 (RSSFSSTSESPTRS) has biased composition (low complexity). 2 consecutive SH3 domains span residues 292–351 (GPMY…RVRP) and 354–411 (NVWR…LTEI).

In terms of assembly, interacts (via SH3 domains) with CACNA1S. Interacts (via SH3 domains) with CACNA1C. Has much lower affinity for CACNA1C than for CACNA1S.

It is found in the cytoplasm. It localises to the cytosol. The protein localises to the cell membrane. Its subcellular location is the sarcolemma. Plays a redundant role in promoting the expression of calcium channel CACNA1S at the cell membrane, and thereby contributes to increased channel activity. Slows down the inactivation rate of the calcium channel CACNA1C. This chain is SH3 and cysteine-rich domain-containing protein 2 (STAC2), found in Homo sapiens (Human).